The primary structure comprises 416 residues: ORC1-type DNA replication protein 9 (416 aa).

ATP-binding positions include 79–83 (SGKSL), Tyr226, and Arg238.

This sequence belongs to the CDC6/cdc18 family.

In terms of biological role, involved in regulation of DNA replication. This is ORC1-type DNA replication protein 9 (cdc6i) from Haloarcula marismortui (strain ATCC 43049 / DSM 3752 / JCM 8966 / VKM B-1809) (Halobacterium marismortui).